A 28-amino-acid chain; its full sequence is Dermaseptin-6TR (28 aa).

Expressed by the skin glands.

Its subcellular location is the secreted. Its function is as follows. Has antimicrobial activity. In Phyllomedusa trinitatis (Trinidad leaf frog), this protein is Dermaseptin-6TR.